Consider the following 485-residue polypeptide: ATP-dependent protease ATPase subunit HslU (485 aa).

ATP is bound by residues isoleucine 22 and 64-69; that span reads GVGKTE. The segment at 146 to 189 is disordered; that stretch reads KKTAATSAQPQDVSQASSGTTISLPSVSSTAQAEEHKAQNENDM. Residues 149-177 show a composition bias toward polar residues; that stretch reads AATSAQPQDVSQASSGTTISLPSVSSTAQ. The segment covering 178-189 has biased composition (basic and acidic residues); that stretch reads AEEHKAQNENDM. ATP contacts are provided by aspartate 297, glutamate 363, and arginine 435.

Belongs to the ClpX chaperone family. HslU subfamily. As to quaternary structure, a double ring-shaped homohexamer of HslV is capped on each side by a ring-shaped HslU homohexamer. The assembly of the HslU/HslV complex is dependent on binding of ATP.

The protein resides in the cytoplasm. Functionally, ATPase subunit of a proteasome-like degradation complex; this subunit has chaperone activity. The binding of ATP and its subsequent hydrolysis by HslU are essential for unfolding of protein substrates subsequently hydrolyzed by HslV. HslU recognizes the N-terminal part of its protein substrates and unfolds these before they are guided to HslV for hydrolysis. In Treponema denticola (strain ATCC 35405 / DSM 14222 / CIP 103919 / JCM 8153 / KCTC 15104), this protein is ATP-dependent protease ATPase subunit HslU.